Reading from the N-terminus, the 474-residue chain is E3 ubiquitin-protein ligase rnf168 (474 aa).

Residues 1-12 (MPPVSEVDRGPV) are compositionally biased toward basic and acidic residues. Residues 1-20 (MPPVSEVDRGPVEESSGGLK) are disordered. The RING-type zinc finger occupies 26–65 (CPVCLEIFLEPVTLPCMHTFCKPCFLETVDKSNMCCPLCR). An LR motif 1 motif is present at residues 119–137 (VCQPGELRKEYEDQISKLV). Residues 152 to 160 (EEYIQRLLA) carry the UMI motif motif. An MIU motif 1 motif is present at residues 174–195 (EEQQLENDEKLARLLSLELNSG). The segment covering 192-203 (LNSGPASESTCN) has biased composition (polar residues). Disordered stretches follow at residues 192-259 (LNSG…KPLS) and 367-474 (IQKE…NMGS). Low complexity predominate over residues 233 to 243 (PSSSDSSPDSS). The MIU motif 2 signature appears at 353 to 376 (RWQQEEEDRRLALRIQKELDRENS). Positions 367 to 383 (IQKELDRENSVDRRKGS) are enriched in basic and acidic residues. The LR motif 2 signature appears at 379 to 390 (RRKGSADSYQLR). Polar residues-rich tracts occupy residues 385–402 (DSYQ…TTSP) and 409–418 (KGSNTTTAKN). Basic and acidic residues predominate over residues 422-432 (RRGEEKTEKRL). The span at 443–457 (VKTPVSSTAVSSTVK) shows a compositional bias: low complexity.

This sequence belongs to the RNF168 family. As to quaternary structure, monomer.

The protein resides in the nucleus. The catalysed reaction is S-ubiquitinyl-[E2 ubiquitin-conjugating enzyme]-L-cysteine + [acceptor protein]-L-lysine = [E2 ubiquitin-conjugating enzyme]-L-cysteine + N(6)-ubiquitinyl-[acceptor protein]-L-lysine.. The protein operates within protein modification; protein ubiquitination. E3 ubiquitin-protein ligase required for accumulation of repair proteins to sites of DNA damage. Acts with ube2n/ubc13 to amplify the rnf8-dependent histone ubiquitination. Recruited to sites of DNA damage at double-strand breaks (DSBs) by binding to ubiquitinated histone H2A and ubiquitinates histone H2A and H2AX, leading to amplify the rnf8-dependent H2A ubiquitination and promoting the formation of 'Lys-63'-linked ubiquitin conjugates. This leads to concentrate ubiquitinated histones H2A and H2AX at DNA lesions. Catalyzes monoubiquitination of 'Lys-13' and 'Lys-15' of nucleosomal histone H2A (H2AK13Ub and H2AK15Ub, respectively). This chain is E3 ubiquitin-protein ligase rnf168, found in Danio rerio (Zebrafish).